We begin with the raw amino-acid sequence, 110 residues long: uncharacterized protein (110 aa).

Belongs to the HesB/IscA family.

This is an uncharacterized protein from Rickettsia prowazekii (strain Madrid E).